Reading from the N-terminus, the 504-residue chain is Carnosic acid synthase (504 aa).

A helical transmembrane segment spans residues 4–24; that stretch reads FIILSLAFIAAWVVYSRWSEY. Position 447 (Cys447) interacts with heme.

It belongs to the cytochrome P450 family. The cofactor is heme. Expressed in glandular trichomes of young leaves.

It is found in the membrane. It catalyses the reaction 11-hydroxyferruginol + 3 reduced [NADPH--hemoprotein reductase] + 3 O2 = carnosate + 3 oxidized [NADPH--hemoprotein reductase] + 4 H2O + 4 H(+). The catalysed reaction is miltiradiene + 2 reduced [NADPH--hemoprotein reductase] + 2 O2 = miltiradien-20-al + 2 oxidized [NADPH--hemoprotein reductase] + 3 H2O + 2 H(+). It carries out the reaction ferruginol + 3 reduced [NADPH--hemoprotein reductase] + 3 O2 = pisiferate + 3 oxidized [NADPH--hemoprotein reductase] + 4 H2O + 4 H(+). It participates in secondary metabolite biosynthesis; terpenoid biosynthesis. Functionally, monooxygenase involved in the biosynthesis of carnosate, a potent antioxidant labdane-related diterpene natural products. Catalyzes the oxidation of 11-hydroxyferruginol to produce carnosate. Mediates the conversion of miltiradien into miltiradien-20-al. Also involved in the production of pisiferic acid and derivative products from ferruginol. In Rosmarinus officinalis (Rosemary), this protein is Carnosic acid synthase.